Consider the following 342-residue polypeptide: S-adenosylmethionine:tRNA ribosyltransferase-isomerase (342 aa).

It belongs to the QueA family. Monomer.

It localises to the cytoplasm. It catalyses the reaction 7-aminomethyl-7-carbaguanosine(34) in tRNA + S-adenosyl-L-methionine = epoxyqueuosine(34) in tRNA + adenine + L-methionine + 2 H(+). It functions in the pathway tRNA modification; tRNA-queuosine biosynthesis. Transfers and isomerizes the ribose moiety from AdoMet to the 7-aminomethyl group of 7-deazaguanine (preQ1-tRNA) to give epoxyqueuosine (oQ-tRNA). This chain is S-adenosylmethionine:tRNA ribosyltransferase-isomerase, found in Bacillus licheniformis (strain ATCC 14580 / DSM 13 / JCM 2505 / CCUG 7422 / NBRC 12200 / NCIMB 9375 / NCTC 10341 / NRRL NRS-1264 / Gibson 46).